We begin with the raw amino-acid sequence, 543 residues long: Protein pbn1 (543 aa).

Over 1–503 (MRRRITFVQR…KGFFQSKAIE (503 aa)) the chain is Lumenal. N-linked (GlcNAc...) asparagine glycosylation occurs at N409. A helical membrane pass occupies residues 504–524 (LGTMIVIGLGSLWVLWKLGAI). Topologically, residues 525 to 543 (AWSSGTRPQRKSTKQKKSE) are cytoplasmic.

Belongs to the PIGX family.

Its subcellular location is the endoplasmic reticulum membrane. It functions in the pathway glycolipid biosynthesis; glycosylphosphatidylinositol-anchor biosynthesis. Functionally, required for proper folding and/or the stability of a subset of proteins in the endoplasmic reticulum. Component of glycosylphosphatidylinositol-mannosyltransferase 1 which transfers the first of the 4 mannoses in the GPI-anchor precursors during GPI-anchor biosynthesis. Probably acts by stabilizing the mannosyltransferase gpi14. This chain is Protein pbn1 (pbn1), found in Aspergillus oryzae (strain ATCC 42149 / RIB 40) (Yellow koji mold).